Reading from the N-terminus, the 710-residue chain is F-box only protein 40 (710 aa).

The segment at Glu-53–Asn-114 adopts a TRAF-type zinc-finger fold. 2 disordered regions span residues Asp-152–Gly-174 and Gly-234–Leu-279. Positions Lys-238–Gly-248 are enriched in basic and acidic residues. In terms of domain architecture, F-box spans Leu-572 to Lys-626.

In terms of assembly, directly interacts with SKP1 and CUL1. Expressed only in heart and skeletal muscle.

It localises to the cytoplasm. Its function is as follows. Probable substrate-recognition component of the SCF (SKP1-CUL1-F-box protein)-type E3 ubiquitin ligase complex that may function in myogenesis. The sequence is that of F-box only protein 40 (Fbxo40) from Mus musculus (Mouse).